The chain runs to 476 residues: Eukaryotic translation initiation factor 3 subunit L (476 aa).

The PCI domain occupies 257-452; sequence DAIRMFSHIL…DLDYALENDL (196 aa).

The protein belongs to the eIF-3 subunit L family. In terms of assembly, component of the eukaryotic translation initiation factor 3 (eIF-3) complex.

The protein localises to the cytoplasm. Its function is as follows. Component of the eukaryotic translation initiation factor 3 (eIF-3) complex, which is involved in protein synthesis of a specialized repertoire of mRNAs and, together with other initiation factors, stimulates binding of mRNA and methionyl-tRNAi to the 40S ribosome. The eIF-3 complex specifically targets and initiates translation of a subset of mRNAs involved in cell proliferation. The protein is Eukaryotic translation initiation factor 3 subunit L of Neosartorya fischeri (strain ATCC 1020 / DSM 3700 / CBS 544.65 / FGSC A1164 / JCM 1740 / NRRL 181 / WB 181) (Aspergillus fischerianus).